Consider the following 694-residue polypeptide: MAREYKIEDYRNFGIMAHIDAGKTTMTERILFYTGKNHKIGETHDGASTMDWMEQEQERGITITSAATTTFWQGRDGKKRRFNIIDTPGHVDFTIEVERSLRVLDGAIALLDANAGVEPQTETVWRQAEKYHVPRMVFVNKMDKIGADFYRSVEMVGSRLGAVALPVQLPIGAENDFVGVVDLIEMKALTWDGTIGAPATVGEIPADMADKAEEYREKLIELAVEIDEAAMEAYLEGTMPTNDELRALIRKGTIEVKFHPILCGTAFKNRGVQPLLDAVVEFLPAPTDVPAIKGIDVKTETETTRESSDEAPLSMLAFKIMNDPFVGSLTFTRIYSGKLTKGVSLENTVKGKRERIGRMLQMHSNSREDIDEAFAGDIVALAGLKETTTGDTLCDPLKPVILERMEFPDPVIEIAIEPKTKADQEKMGIALNRLAAEDPSFRVKSDEESGQTIIAGMGELHLDILVDRMKREFKVEANVGAPQVAYRESITRAAEIDYTHKKQSGGSGQFARVKIIFEPHDGDDFIFESKIVGGSVPKEYIPGVQKGIESVMGAGPLAGFPMLGVKATLIDGAYHDVDSSVLAFEIASRAAFREGAQKAGAQLLEPIMKVEVVTPEDYVGDVIGDLNSRRGQISGTEARGIATVVNAMVPLANMFGYVNSLRSMSQGRAQYTMQFDHYEPVPTAVAQEIQKKFA.

Residues 8–287 (EDYRNFGIMA…AVVEFLPAPT (280 aa)) form the tr-type G domain. GTP contacts are provided by residues 17–24 (AHIDAGKT), 86–90 (DTPGH), and 140–143 (NKMD).

The protein belongs to the TRAFAC class translation factor GTPase superfamily. Classic translation factor GTPase family. EF-G/EF-2 subfamily.

The protein resides in the cytoplasm. Functionally, catalyzes the GTP-dependent ribosomal translocation step during translation elongation. During this step, the ribosome changes from the pre-translocational (PRE) to the post-translocational (POST) state as the newly formed A-site-bound peptidyl-tRNA and P-site-bound deacylated tRNA move to the P and E sites, respectively. Catalyzes the coordinated movement of the two tRNA molecules, the mRNA and conformational changes in the ribosome. The chain is Elongation factor G from Brucella melitensis biotype 1 (strain ATCC 23456 / CCUG 17765 / NCTC 10094 / 16M).